A 275-amino-acid polypeptide reads, in one-letter code: ADP-dependent (S)-NAD(P)H-hydrate dehydratase (275 aa).

The YjeF C-terminal domain occupies 5–273 (TDEILAKVIK…EEIPLFMKKY (269 aa)). Alanine 40, glycine 103, and histidine 151 together coordinate (6S)-NADPHX. Glycine 214 serves as a coordination point for AMP. Aspartate 215 serves as a coordination point for (6S)-NADPHX.

The protein belongs to the NnrD/CARKD family. Homotetramer. The cofactor is Mg(2+).

The catalysed reaction is (6S)-NADHX + ADP = AMP + phosphate + NADH + H(+). The enzyme catalyses (6S)-NADPHX + ADP = AMP + phosphate + NADPH + H(+). Catalyzes the dehydration of the S-form of NAD(P)HX at the expense of ADP, which is converted to AMP. Together with NAD(P)HX epimerase, which catalyzes the epimerization of the S- and R-forms, the enzyme allows the repair of both epimers of NAD(P)HX, a damaged form of NAD(P)H that is a result of enzymatic or heat-dependent hydration. The polypeptide is ADP-dependent (S)-NAD(P)H-hydrate dehydratase (Lactococcus lactis subsp. lactis (strain IL1403) (Streptococcus lactis)).